We begin with the raw amino-acid sequence, 136 residues long: Mini-ribonuclease 3 (136 aa).

The active site involves Asp20.

This sequence belongs to the MrnC RNase family. As to quaternary structure, homodimer. Mg(2+) serves as cofactor.

It localises to the cytoplasm. Its function is as follows. Involved in correct processing of both the 5' and 3' ends of 23S rRNA precursor. Processes 30S rRNA precursor transcript even in absence of ribonuclease 3 (Rnc); Rnc processes 30S rRNA into smaller rRNA precursors. In Listeria monocytogenes serovar 1/2a (strain ATCC BAA-679 / EGD-e), this protein is Mini-ribonuclease 3.